Here is a 720-residue protein sequence, read N- to C-terminus: Mitogen-activated protein kinase 6 (720 aa).

Residue Met-1 forms a Peptide (Met-Gly) (interchain with G-Cter in ubiquitin) linkage. In terms of domain architecture, Protein kinase spans 20 to 316 (YMDLKPLGCG…AEEALSHPYM (297 aa)). ATP contacts are provided by residues 26–34 (LGCGGNGLV) and Lys-49. The active-site Proton acceptor is Asp-152. A Phosphoserine; by PAK1, PAK2 and PAK3 modification is found at Ser-189. Residues 189 to 191 (SEG) carry the SEG motif motif. The FRIEDE motif motif lies at 332-337 (FHIEDE). Residues Ser-386, Ser-554, and Ser-556 each carry the phosphoserine modification. The tract at residues 638–657 (SEMLETEPVEEGKRGERGRE) is disordered. Over residues 647–657 (EEGKRGERGRE) the composition is skewed to basic and acidic residues. Phosphoserine is present on Ser-683. A compositionally biased stretch (polar residues) spans 700–714 (AMKSSPQIPHKTYSS). The segment at 700–720 (AMKSSPQIPHKTYSSILKHLN) is disordered.

It belongs to the protein kinase superfamily. CMGC Ser/Thr protein kinase family. MAP kinase subfamily. Heterodimer with ERK4/MAPK4. Interacts with (via FRIEDE motif) MAPKAPK5. Interacts with UBE3A; this interaction may be indirect and mediated by HERC2, possibly via HERC2 interaction with NEURL4. The cofactor is Mg(2+). In terms of processing, phosphorylated at Ser-189 by PAK1, PAK2 and PAK3 resulting in catalytic activation. Phosphorylated by MAPKAPK5 at other sites. Ubiquitination at Met-1 leads to degradation by the proteasome pathway.

It is found in the cytoplasm. Its subcellular location is the nucleus. The enzyme catalyses L-seryl-[protein] + ATP = O-phospho-L-seryl-[protein] + ADP + H(+). It catalyses the reaction L-threonyl-[protein] + ATP = O-phospho-L-threonyl-[protein] + ADP + H(+). Activated by phosphorylation at Ser-189. Its function is as follows. Atypical MAPK protein. Phosphorylates microtubule-associated protein 2 (MAP2) and MAPKAPK5. The precise role of the complex formed with MAPKAPK5 is still unclear, but the complex follows a complex set of phosphorylation events: upon interaction with atypical MAPKAPK5, ERK3/MAPK6 is phosphorylated at Ser-189 and then mediates phosphorylation and activation of MAPKAPK5, which in turn phosphorylates ERK3/MAPK6. May promote entry in the cell cycle. In Mus musculus (Mouse), this protein is Mitogen-activated protein kinase 6 (Mapk6).